We begin with the raw amino-acid sequence, 261 residues long: Kallikrein 1-related peptidase b26 (261 aa).

Residues 1-18 (MWFLILFPALSLGGIDAA) form the signal peptide. A propeptide spans 19–24 (PPLQSR) (activation peptide). Residues 25-258 (VVGGFNCEKN…FNSWIKDTMM (234 aa)) enclose the Peptidase S1 domain. Cystine bridges form between cysteine 31/cysteine 173, cysteine 50/cysteine 66, cysteine 152/cysteine 219, cysteine 184/cysteine 198, and cysteine 209/cysteine 234. Residue histidine 65 is the Charge relay system of the active site. The N-linked (GlcNAc...) asparagine glycan is linked to asparagine 102. The Charge relay system role is filled by aspartate 120. Residue serine 213 is the Charge relay system of the active site.

It belongs to the peptidase S1 family. Kallikrein subfamily.

It carries out the reaction Preferential cleavage of Arg-|-Xaa bonds in small molecule substrates. Highly selective action to release kallidin (lysyl-bradykinin) from kininogen involves hydrolysis of Met-|-Xaa or Leu-|-Xaa.. Glandular kallikreins cleave Met-Lys and Arg-Ser bonds in kininogen to release Lys-bradykinin. Functionally, prorenin-converting enzyme cleaves mouse REN-2 prorenin at a dibasic site to yield mature renin. The polypeptide is Kallikrein 1-related peptidase b26 (Klk1b26) (Mus musculus (Mouse)).